Reading from the N-terminus, the 432-residue chain is PC-esterase domain-containing protein 1B (432 aa).

Disordered regions lie at residues 273-312 (WESS…SPGL) and 407-432 (GPYM…SRPQ). The span at 285–294 (QDNIGPQFAQ) shows a compositional bias: polar residues. The segment covering 296 to 312 (PPYPFPRPPPLLPSPGL) has biased composition (pro residues).

Belongs to the PC-esterase family.

The polypeptide is PC-esterase domain-containing protein 1B (Pced1b) (Rattus norvegicus (Rat)).